A 95-amino-acid chain; its full sequence is Phosphoribosyl-ATP pyrophosphatase (95 aa).

Belongs to the PRA-PH family.

It is found in the cytoplasm. The catalysed reaction is 1-(5-phospho-beta-D-ribosyl)-ATP + H2O = 1-(5-phospho-beta-D-ribosyl)-5'-AMP + diphosphate + H(+). The protein operates within amino-acid biosynthesis; L-histidine biosynthesis; L-histidine from 5-phospho-alpha-D-ribose 1-diphosphate: step 2/9. The polypeptide is Phosphoribosyl-ATP pyrophosphatase (Halobacterium salinarum (strain ATCC 29341 / DSM 671 / R1)).